The following is a 516-amino-acid chain: Nucleolar complex protein 4 homolog (516 aa).

3 helical membrane-spanning segments follow: residues S296–I316, F347–A367, and L375–L395.

It belongs to the CBF/MAK21 family.

It localises to the nucleus membrane. Its subcellular location is the nucleus. It is found in the nucleolus. This is Nucleolar complex protein 4 homolog (Noc4l) from Rattus norvegicus (Rat).